Reading from the N-terminus, the 100-residue chain is NADH-quinone oxidoreductase subunit K (100 aa).

The next 3 membrane-spanning stretches (helical) occupy residues M1–G21, I28–A48, and F64–F84.

It belongs to the complex I subunit 4L family. NDH-1 is composed of 14 different subunits. Subunits NuoA, H, J, K, L, M, N constitute the membrane sector of the complex.

It is found in the cell inner membrane. It carries out the reaction a quinone + NADH + 5 H(+)(in) = a quinol + NAD(+) + 4 H(+)(out). Its function is as follows. NDH-1 shuttles electrons from NADH, via FMN and iron-sulfur (Fe-S) centers, to quinones in the respiratory chain. The immediate electron acceptor for the enzyme in this species is believed to be ubiquinone. Couples the redox reaction to proton translocation (for every two electrons transferred, four hydrogen ions are translocated across the cytoplasmic membrane), and thus conserves the redox energy in a proton gradient. The protein is NADH-quinone oxidoreductase subunit K of Helicobacter pylori (strain ATCC 700392 / 26695) (Campylobacter pylori).